Reading from the N-terminus, the 1083-residue chain is Kinesin-like protein KIN-14R (1083 aa).

Positions 264–418 form a coiled coil; that stretch reads HDKYEKKIAE…NHIQETKGNI (155 aa). Residues 417–739 enclose the Kinesin motor domain; it reads NIRVFCRCRP…LNFATRVRGV (323 aa). 500 to 507 contacts ATP; it reads GQTGTGKT. 2 coiled-coil regions span residues 746 to 876 and 905 to 947; these read KQVD…SEGS and IKEL…MATT. The disordered stretch occupies residues 967–1083; it reads EDNFGNENME…RDSKKKIWSR (117 aa). Residues 971–985 are compositionally biased toward polar residues; it reads GNENMESNTNILRTS. Basic and acidic residues predominate over residues 1020 to 1032; sequence PQMKEKRIRKSDP. The segment covering 1044–1054 has biased composition (polar residues); sequence RTASGSSSQVP. Over residues 1062 to 1083 the composition is skewed to basic and acidic residues; sequence KREQQEVPVVKERDSKKKIWSR.

It belongs to the TRAFAC class myosin-kinesin ATPase superfamily. Kinesin family. KIN-14 subfamily.

The chain is Kinesin-like protein KIN-14R from Arabidopsis thaliana (Mouse-ear cress).